The following is a 441-amino-acid chain: Cysteine desulfurase, mitosomal (441 aa).

Pyridoxal 5'-phosphate-binding positions include 107–108 (AT), Asn-189, Gln-217, and 237–239 (SGH). At Lys-240 the chain carries N6-(pyridoxal phosphate)lysine. Residue Thr-277 participates in pyridoxal 5'-phosphate binding. Cys-367 functions as the Cysteine persulfide intermediate in the catalytic mechanism. Cys-367 contributes to the [2Fe-2S] cluster binding site.

Belongs to the class-V pyridoxal-phosphate-dependent aminotransferase family. NifS/IscS subfamily. In terms of assembly, interacts with ISD11. Requires pyridoxal 5'-phosphate as cofactor.

The protein localises to the mitosome. It catalyses the reaction (sulfur carrier)-H + L-cysteine = (sulfur carrier)-SH + L-alanine. Functionally, catalyzes the removal of elemental sulfur from cysteine to produce alanine. It supplies the inorganic sulfur for iron-sulfur (Fe-S) clusters in mitosomes. The sequence is that of Cysteine desulfurase, mitosomal from Trachipleistophora hominis (Microsporidian parasite).